The following is a 185-amino-acid chain: Ribosome maturation factor RimM (185 aa).

Residues 105 to 184 (KDEYYWKDII…IVVVDWEIYK (80 aa)) form the PRC barrel domain.

This sequence belongs to the RimM family. Binds ribosomal protein uS19.

The protein resides in the cytoplasm. Functionally, an accessory protein needed during the final step in the assembly of 30S ribosomal subunit, possibly for assembly of the head region. Essential for efficient processing of 16S rRNA. May be needed both before and after RbfA during the maturation of 16S rRNA. It has affinity for free ribosomal 30S subunits but not for 70S ribosomes. The polypeptide is Ribosome maturation factor RimM (Blochmanniella floridana).